The chain runs to 194 residues: MSLNTEQASIEFNKMLQNGNTTISVQSMNLIKKIIESDQITNKFNHGVRETIKILNPFHGNKVDIDVDVAQLVKYMWISGIRTTNICSCNESIPRDYVWIEFLDTESMKKFISIVFTGIPNTSDIFSRANKLTGINEGSWIYDLTLMDDNPTTRGFDIKDVYTFISVRFPKSDYKWICKRFEKNIKDNNTCTLF.

This is an uncharacterized protein from Acanthamoeba polyphaga (Amoeba).